The primary structure comprises 464 residues: Cyclic 2,3-diphosphoglycerate synthetase (464 aa).

It belongs to the cyclic 2,3-diphosphoglycerate synthetase family.

It localises to the cytoplasm. It carries out the reaction (2R)-2,3-bisphosphoglycerate + ATP + H(+) = cyclic (2R)-2,3-bisphosphoglycerate + ADP + phosphate. With respect to regulation, activity decreases in response to phosphate limitation. Its function is as follows. Catalyzes the formation of cyclic 2,3-diphosphoglycerate (cDPG) by formation of an intramolecular phosphoanhydride bond at the expense of ATP. Not able to catalyze cDPG hydrolysis. May be involved in osmotic balance. In Methanothermobacter thermautotrophicus (strain ATCC 29096 / DSM 1053 / JCM 10044 / NBRC 100330 / Delta H) (Methanobacterium thermoautotrophicum), this protein is Cyclic 2,3-diphosphoglycerate synthetase (cpgS).